The chain runs to 544 residues: Chromatin assembly factor 1 subunit A (544 aa).

Over residues 1–22 (MNSESVDSDVAASTSNKGNELC) the composition is skewed to polar residues. Disordered regions lie at residues 1-52 (MNSE…EADE), 67-117 (IYNG…REQE), and 138-160 (QEQQ…AQRL). The span at 23-35 (SSSTDITSLSVSS) shows a compositional bias: low complexity. Residues 36 to 47 (PNESVIHSSHSA) are compositionally biased toward polar residues. The tract at residues 56 to 170 (KLSYEGNRKK…RQEQILNKER (115 aa)) is interaction with DNA and pcn1/PCNA. A compositionally biased stretch (basic and acidic residues) spans 74–117 (AGKEKKLQKQRAQEERIRQKEAERLKREKERQQREQEKKLREQE). A coiled-coil region spans residues 76 to 176 (KEKKLQKQRA…NKERQQLKLN (101 aa)). The PCNA-interaction protein (PIP box) signature appears at 172–179 (QLKLNNFF). Residues 325 to 396 (SNVLLNPWLE…DKDSVNASNT (72 aa)) form an interaction with histones H3/H4 region. Positions 351-388 (DEEDDGEDLESEDEEVDNSDDIVEDGDNAFVDDEDDDK) are enriched in acidic residues. The disordered stretch occupies residues 351 to 400 (DEEDDGEDLESEDEEVDNSDDIVEDGDNAFVDDEDDDKDSVNASNTHRSS).

Belongs to the RLF2 family. Component of chromatin assembly factor 1 (CAF-1), composed of pcf1, pcf2 and pcf3. Interacts (via PIP motif) with pcn1/PCNA; the interaction is direct and occurs during S-phase. Interacts with swi6 at the G1/S-phase transition and early S-phase, but not in the G2 phase. The CAF-1 complex interacts with histone H3/H4 dimers.

It localises to the nucleus. In terms of biological role, acts as a component of the histone chaperone complex chromatin assembly factor 1 (CAF-1), which assembles histone octamers onto DNA during replication and repair. CAF-1 performs the first step of the nucleosome assembly process, bringing newly synthesized histones H3 and H4 to replicating DNA; histones H2A/H2B can bind to this chromatin precursor subsequent to DNA replication to complete the histone octamer. Plays a role in the maintenance of heterochromatin. The sequence is that of Chromatin assembly factor 1 subunit A from Schizosaccharomyces pombe (strain 972 / ATCC 24843) (Fission yeast).